The chain runs to 524 residues: Bifunctional purine biosynthesis protein PurH (524 aa).

The MGS-like domain maps to methionine 1–valine 144.

Belongs to the PurH family.

The enzyme catalyses (6R)-10-formyltetrahydrofolate + 5-amino-1-(5-phospho-beta-D-ribosyl)imidazole-4-carboxamide = 5-formamido-1-(5-phospho-D-ribosyl)imidazole-4-carboxamide + (6S)-5,6,7,8-tetrahydrofolate. The catalysed reaction is IMP + H2O = 5-formamido-1-(5-phospho-D-ribosyl)imidazole-4-carboxamide. The protein operates within purine metabolism; IMP biosynthesis via de novo pathway; 5-formamido-1-(5-phospho-D-ribosyl)imidazole-4-carboxamide from 5-amino-1-(5-phospho-D-ribosyl)imidazole-4-carboxamide (10-formyl THF route): step 1/1. Its pathway is purine metabolism; IMP biosynthesis via de novo pathway; IMP from 5-formamido-1-(5-phospho-D-ribosyl)imidazole-4-carboxamide: step 1/1. This chain is Bifunctional purine biosynthesis protein PurH, found in Anaeromyxobacter sp. (strain K).